The primary structure comprises 61 residues: Temporin-SN4 (61 aa).

The signal sequence occupies residues 1 to 22 (MFTLKKTLLLLFFLGTINLSLC). A propeptide spans 23-44 (EEERNAEEERRDGDDEMDVEVK) (removed in mature form). Lys-61 is subject to Lysine amide.

Belongs to the frog skin active peptide (FSAP) family. Temporin subfamily. Expressed by the skin glands.

The protein localises to the secreted. In terms of biological role, antimicrobial peptide. Active against some Gram-positive and Gram-negative bacterial strains. Active against fungus C.glabrata 090902 but not against C.albicans ATCC 12231. Shows weak hemolytic activity against human erythrocytes. In Sylvirana spinulosa (Fine-spined frog), this protein is Temporin-SN4.